Consider the following 201-residue polypeptide: Protein GrpE (201 aa).

A compositionally biased stretch (polar residues) spans Met1–Ser11. The segment at Met1–Asp40 is disordered.

This sequence belongs to the GrpE family. As to quaternary structure, homodimer.

The protein resides in the cytoplasm. Participates actively in the response to hyperosmotic and heat shock by preventing the aggregation of stress-denatured proteins, in association with DnaK and GrpE. It is the nucleotide exchange factor for DnaK and may function as a thermosensor. Unfolded proteins bind initially to DnaJ; upon interaction with the DnaJ-bound protein, DnaK hydrolyzes its bound ATP, resulting in the formation of a stable complex. GrpE releases ADP from DnaK; ATP binding to DnaK triggers the release of the substrate protein, thus completing the reaction cycle. Several rounds of ATP-dependent interactions between DnaJ, DnaK and GrpE are required for fully efficient folding. The protein is Protein GrpE of Beijerinckia indica subsp. indica (strain ATCC 9039 / DSM 1715 / NCIMB 8712).